The primary structure comprises 401 residues: Argininosuccinate synthase (401 aa).

ATP is bound by residues 10-18 (AYSGGVDTS) and Ala38. Residue Tyr89 participates in L-citrulline binding. Residue Gly119 participates in ATP binding. 3 residues coordinate L-aspartate: Thr121, Asn125, and Asp126. Asn125 contacts L-citrulline. Arg129, Ser177, Ser186, Glu262, and Tyr274 together coordinate L-citrulline.

It belongs to the argininosuccinate synthase family. Type 1 subfamily. As to quaternary structure, homotetramer.

It localises to the cytoplasm. It carries out the reaction L-citrulline + L-aspartate + ATP = 2-(N(omega)-L-arginino)succinate + AMP + diphosphate + H(+). It functions in the pathway amino-acid biosynthesis; L-arginine biosynthesis; L-arginine from L-ornithine and carbamoyl phosphate: step 2/3. This is Argininosuccinate synthase from Synechococcus sp. (strain WH7803).